Here is a 184-residue protein sequence, read N- to C-terminus: Type-1 fimbrial protein, A chain (184 aa).

Positions 1–22 are cleaved as a signal peptide; it reads MKHKLMTSTIASLMFVAGAAVA. Residues Cys46 and Cys86 are joined by a disulfide bond.

This sequence belongs to the fimbrial protein family.

Its subcellular location is the fimbrium. Fimbriae (also called pili), polar filaments radiating from the surface of the bacterium to a length of 0.5-1.5 micrometers and numbering 100-300 per cell, enable bacteria to colonize the epithelium of specific host organs. In Salmonella typhi, this protein is Type-1 fimbrial protein, A chain (fimA).